The following is a 1547-amino-acid chain: MEMLTIDDRSHQFAYPVRWIETQHHILSELDSERVVEVGPANILTNMMKKTWEQQFANIDQALGIERKFFGPRDVFFPPNRENMDMLRAASKKTLPEAHPPPPIDSHQEPSTQTQATHRSAGVPVSLPQQIATNIPPAILEDVSLPVSTIVRSLVAMKLRKRSDDISEDQTINRLVGGRSTLMNEILGDLHAEFPGHVPERPDDIPIKDLGETMSIGHNGRLGKCTASLVNKMISSKMPGNWGQSSVRQFLQQKWGLAPMRQDAFLLLAVEKQPATRLSTPDSVDQFLVDIATEYFKKEGMSIPQATQQENSSQDSTARIVDVQGLRTAAVVDTAMVKDIIEVLKGYSNQQGNALEATMPHHTIDASHNASEPVDLWLTEHGDEYAAGIQPMFDGQKERLYDSYWNWIHQDITELVTLSRADDSDSYPGLVGLTMRILNKICDRSLDHLSYAITQAKISGSRNPIHIQTLQSVYESSLIFKAKNPIFLNRTGGDTTARYTGHDGLVSSLMKHVYDGFIPKDTLPLDIPVGKLTGQGFVISPTHTKMFATDVDRSRVLGLTFVGKNVLITGAGKNSIGLGILRHLLSGGARVIVTTSSYTSKTTRMYQELYAKHGSRGSILRLIPFNQGSWHDVQGLTEWIYKDESWDLDFIIPFAAVPERGRSLENLDSGSELAHRVMLTNLLRLLGGISRNKRSRGIVTRPATVLLPFSPNHGILGNDGLYSESKVSLEILLNKWASESWADFLSLMGVIIGWTRGTGLMAENDEIADAVEKLGAKTFSSDEMAGYIATLMGGTITTECQKEPLVVDLGGGLSRIQNLKGQLADARKALRESAELQRAVAEANLRQSISISGETSRKTSSSTTLHPRISLKLSWPQLPDYNQDISPLSDSLLDMLDLSRVVVITGFSELGPHGNSRTRWELERNGTLSPEGCAELAWMMGLIQHHSGISKDGSPFSGWMDSTTKELVEDFDILSRYESRVLKHTGIRKIEPDICDSGYDPERKESLQEIVLQRDLPAFESTAEVADDMMRKHGDRVAVTNGTSDGMRLVQLKAGAVIWVPRASRFNRTVAGQIPSGWSAKRYGISDEIIEQVDPVTLFSLVCTVEALLSSGITDPYEWYQHIHISELGNCIGSSMGGLSSLKKMHRDRYLDRPVKGDILQETFINTTAAWINMLLFSSAGPIKTPVGACATSLESLDTGRDLIVAKKAKIVLVGGVEDFVEDVSYEFGSMKATCDTEAEIRHGRSPDEMSRPMASSRAGFVEAQGCGIQVLTSAELALKMGLPIYGIVAYTNMSADKIGRSVPAAGRGVLTNAREPAHIRGPETTYNVLSRSLLNLTHRRQMLQERRSQISAFVTDSNRLLDEEIANLEQNSDFTQEDITRFRLQQLRFIHEEASRQEADAAFALGNEFWKSGSNQAVSPIRGSLAAWGLDVDDICVASLHGKTLQVEGDHSCIKACSVTSFGFGQKGSQAILIHPRYLFATISKTQYEEYIAKNSIRLKRASQTYSEGIINGDLVSKFIKEHQPYPAQDEEAWLLNPAMRLKNFS.

The tract at residues 94–121 (TLPEAHPPPPIDSHQEPSTQTQATHRSA) is disordered. A compositionally biased stretch (polar residues) spans 109–118 (EPSTQTQATH). The Carrier domain maps to 145 to 221 (LPVSTIVRSL…ETMSIGHNGR (77 aa)). S180 is modified (O-(pantetheine 4'-phosphoryl)serine). Positions 563 to 798 (GKNVLITGAG…ATLMGGTITT (236 aa)) are ketoreductase (KR) domain. The Ketosynthase family 3 (KS3) domain occupies 1004 to 1476 (KESLQEIVLQ…QKGSQAILIH (473 aa)). Active-site for beta-ketoacyl synthase activity residues include C1190 and H1442.

Belongs to the thiolase-like superfamily. Fungal fatty acid synthetase subunit alpha family. Pantetheine 4'-phosphate serves as cofactor.

It carries out the reaction acetyl-CoA + n malonyl-CoA + 2n NADPH + 4n H(+) = a long-chain-acyl-CoA + n CoA + n CO2 + 2n NADP(+).. The catalysed reaction is a fatty acyl-[ACP] + malonyl-[ACP] + H(+) = a 3-oxoacyl-[ACP] + holo-[ACP] + CO2. The enzyme catalyses a (3R)-hydroxyacyl-[ACP] + NADP(+) = a 3-oxoacyl-[ACP] + NADPH + H(+). It participates in mycotoxin biosynthesis; HC-toxin biosynthesis. In terms of biological role, fatty acid synthase alpha subunit, part of the diffuse TOX2 gene cluster that mediates the biosynthesis of the HC-toxin, cyclic tetrapeptide of structure cyclo(D-Pro-L-Ala-D-Ala-L-Aeo), where Aeo stands for 2-amino-9,10-epoxi-8-oxodecanoic acid. HC-toxin is a determinant of specificity and virulence in the interaction between the producing fungus and its host, maize. TOXH contribute to the synthesis of the decanoic backbone of 2-amino-9,10-epoxi-8-oxodecanoic acid, an essential precursor for the production of the major forms of HC-toxin by the non-ribosomal peptide synthetase HTS1. The sequence is that of Fatty acid synthase subunit alpha from Cochliobolus carbonum (Maize leaf spot fungus).